Reading from the N-terminus, the 157-residue chain is Endoribonuclease YbeY (157 aa).

H118, H122, and H128 together coordinate Zn(2+).

This sequence belongs to the endoribonuclease YbeY family. Zn(2+) is required as a cofactor.

Its subcellular location is the cytoplasm. Functionally, single strand-specific metallo-endoribonuclease involved in late-stage 70S ribosome quality control and in maturation of the 3' terminus of the 16S rRNA. The polypeptide is Endoribonuclease YbeY (Bordetella bronchiseptica (strain ATCC BAA-588 / NCTC 13252 / RB50) (Alcaligenes bronchisepticus)).